We begin with the raw amino-acid sequence, 244 residues long: Secreted RxLR effector protein RXLR-C05 (244 aa).

The signal sequence occupies residues 1–21 (MRGAFYVATAFLIASSTRTAA). The span at 37 to 46 (LPVGDSDTKS) shows a compositional bias: basic and acidic residues. The segment at 37 to 56 (LPVGDSDTKSLPRRSLKGSG) is disordered. Positions 50 to 68 (RSLKGSGDRLEIPVAEEER) match the RxLR-dEER motif.

It belongs to the RxLR effector family.

Its subcellular location is the secreted. It is found in the host cytoplasm. It localises to the host nucleus. Functionally, secreted effector that suppresses pattern-triggered immunity (PTI) in plant host. This chain is Secreted RxLR effector protein RXLR-C05, found in Plasmopara halstedii (Downy mildew of sunflower).